The primary structure comprises 578 residues: Zinc finger protein 248 (578 aa).

Residues 8-78 (VSFKDVCVDF…LEKGFPSQDP (71 aa)) enclose the KRAB domain. The segment at 239 to 263 (TVCKYNECGRTFIESLKLNISQRPH) adopts a C2H2-type 1; degenerate zinc-finger fold. A Glycyl lysine isopeptide (Lys-Gly) (interchain with G-Cter in SUMO2) cross-link involves residue Lys340. 7 C2H2-type zinc fingers span residues 379-401 (FECG…QRTH), 407-429 (YECT…QRTH), 435-457 (YECK…QRTH), 463-485 (YECN…QRTH), 491-513 (FICN…QRTH), 519-542 (YKCN…RTHT), and 547-569 (YECN…QRIH).

This sequence belongs to the krueppel C2H2-type zinc-finger protein family.

Its subcellular location is the nucleus. Functionally, may be involved in transcriptional regulation. The sequence is that of Zinc finger protein 248 (ZNF248) from Pongo abelii (Sumatran orangutan).